The chain runs to 650 residues: Sodium-dependent phosphate transporter 2 (650 aa).

Residues M1–G5 lie on the Extracellular side of the membrane. A helical transmembrane segment spans residues Y6–A26. At N27–Q46 the chain is on the cytoplasmic side. The helical transmembrane segment at A47–G67 threads the bilayer. The Extracellular portion of the chain corresponds to E68–T83. N81 carries N-linked (GlcNAc...) asparagine glycosylation. Residues V84 to I104 traverse the membrane as a helical segment. Over A105–R109 the chain is Cytoplasmic. A helical membrane pass occupies residues L110–N130. The Extracellular segment spans residues G131–K142. A helical transmembrane segment spans residues I143–V163. The Cytoplasmic segment spans residues L164 to A192. Residues I193 to I212 traverse the membrane as a helical segment. A topological domain (extracellular) is located at residue W213. Residues A214 to V234 form a helical membrane-spanning segment. Residues C235–E482 lie on the Cytoplasmic side of the membrane. Phosphoserine is present on residues S253, S256, S259, S268, S315, and S384. A disordered region spans residues S268–Y310. The helical transmembrane segment at V483–G503 threads the bilayer. Topologically, residues G504–A530 are extracellular. The chain crosses the membrane as a helical span at residues A531 to W551. The Cytoplasmic segment spans residues G552–G571. The chain crosses the membrane as a helical span at residues F572–S586. Over N587–S593 the chain is Extracellular. The helical transmembrane segment at T594–R609 threads the bilayer. Topologically, residues S610 to N621 are cytoplasmic. A helical transmembrane segment spans residues I622–A642. Over I643–S650 the chain is Extracellular.

It belongs to the inorganic phosphate transporter (PiT) (TC 2.A.20) family. As to quaternary structure, homodimer.

The protein resides in the cell membrane. It localises to the apical cell membrane. The catalysed reaction is 2 Na(+)(out) + phosphate(out) = 2 Na(+)(in) + phosphate(in). In terms of biological role, sodium-phosphate symporter which preferentially transports the monovalent form of phosphate with a stoichiometry of two sodium ions per phosphate ion. Plays a critical role in the determination of bone quality and strength by providing phosphate for bone mineralization. Required to maintain normal cerebrospinal fluid phosphate levels. Mediates phosphate-induced calcification of vascular smooth muscle cells (VCMCs) and can functionally compensate for loss of SLC20A1 in VCMCs. Its function is as follows. (Microbial infection) Functions as a retroviral receptor and confers hamster cells susceptibility to infection to Gibbon Ape Leukemia Virus (GaLV) and amphotropic murine leukemia virus (A-MuLV). In Cricetulus griseus (Chinese hamster), this protein is Sodium-dependent phosphate transporter 2 (SLC20A2).